The chain runs to 296 residues: Phosphatidylglycerol--prolipoprotein diacylglyceryl transferase (296 aa).

A run of 4 helical transmembrane segments spans residues 10-30 (IAFS…LAAF), 57-77 (LLFY…MLFY), 92-112 (VWEG…ACWL), and 119-139 (LHFF…LGFG). Residue Arg-140 coordinates a 1,2-diacyl-sn-glycero-3-phospho-(1'-sn-glycerol). Helical transmembrane passes span 194-214 (QLYE…TFSM), 220-240 (YAVS…VEFV), and 254-274 (WLTM…VLLA).

The protein belongs to the Lgt family.

Its subcellular location is the cell inner membrane. It carries out the reaction L-cysteinyl-[prolipoprotein] + a 1,2-diacyl-sn-glycero-3-phospho-(1'-sn-glycerol) = an S-1,2-diacyl-sn-glyceryl-L-cysteinyl-[prolipoprotein] + sn-glycerol 1-phosphate + H(+). It functions in the pathway protein modification; lipoprotein biosynthesis (diacylglyceryl transfer). Its function is as follows. Catalyzes the transfer of the diacylglyceryl group from phosphatidylglycerol to the sulfhydryl group of the N-terminal cysteine of a prolipoprotein, the first step in the formation of mature lipoproteins. The protein is Phosphatidylglycerol--prolipoprotein diacylglyceryl transferase of Xanthomonas euvesicatoria pv. vesicatoria (strain 85-10) (Xanthomonas campestris pv. vesicatoria).